Here is an 805-residue protein sequence, read N- to C-terminus: Ubiquitin carboxyl-terminal hydrolase 10 (805 aa).

Residues 139–170 form a disordered region; that stretch reads DGSGNADSDGTSGTGQRERKKKKKRPPGYYSY. A compositionally biased stretch (polar residues) spans 143–153; the sequence is NADSDGTSGTG. One can recognise a USP domain in the interval 422 to 802; sequence RGLINKGNWC…TAYLLYYRRV (381 aa). The active-site Nucleophile is the C431. The tract at residues 561–593 is disordered; sequence HINNGPDPVSEKEEINKDEQEGSDEEWEQVGPR. Residues 569–580 show a composition bias toward basic and acidic residues; it reads VSEKEEINKDEQ. The active-site Proton acceptor is the H756.

The protein belongs to the peptidase C19 family. USP10 subfamily.

The protein localises to the cytoplasm. The protein resides in the nucleus. It catalyses the reaction Thiol-dependent hydrolysis of ester, thioester, amide, peptide and isopeptide bonds formed by the C-terminal Gly of ubiquitin (a 76-residue protein attached to proteins as an intracellular targeting signal).. Functionally, hydrolase that can remove conjugated ubiquitin from target proteins such as p53/tp53, rps2/us5, rps3/us3, rps10/eS10, becn1, snx3 and cftr. Acts as an essential regulator of p53/tp53 stability: in unstressed cells, specifically deubiquitinates p53/tp53 in the cytoplasm, leading to counteracts MDM2 action and stabilize p53/tp53. Following DNA damage, translocates to the nucleus and deubiquitinates p53/tp53, leading to regulate the p53/TP53-dependent DNA damage response. Component of a regulatory loop that controls autophagy and p53/tp53 levels. Plays a key role in 40S ribosome subunit recycling when a ribosome has stalled during translation: acts both by inhibiting formation of stress granules, which store stalled translation pre-initiation complexes, and mediating deubiquitination of 40S ribosome subunits. Deubiquitinates cftr in early endosomes, enhancing its endocytic recycling. This chain is Ubiquitin carboxyl-terminal hydrolase 10 (usp10), found in Xenopus tropicalis (Western clawed frog).